The chain runs to 1041 residues: Importin-9 (1041 aa).

Ala-2 carries the N-acetylalanine modification. The region spanning 43–119 (AEEQIKVLEV…RELLPNGLRE (77 aa)) is the Importin N-terminal domain. Residues 936-967 (QATPAEWNQDDSNDMWEDQEEEEEEEEDGLAG) form a disordered region. Residues 943-964 (NQDDSNDMWEDQEEEEEEEEDG) show a composition bias toward acidic residues.

This sequence belongs to the importin beta family. In terms of assembly, interacts with histones H2A, H2B, H3 and H4. The binding is coupled to RanGTP cycles. Interacts with AKIRIN2; promoting association with pre-assembled proteasomes. Associates with pre-assembled proteasomes; interaction is indirect and mediated via interaction with AKIRIN2. Interacts with PPP2R1A and PPP2R1B.

The protein resides in the cytoplasm. It localises to the nucleus. In terms of biological role, nuclear transport receptor that mediates nuclear import of proteins, such as histones, proteasome and actin. Serves as receptor for nuclear localization signals (NLS) in cargo substrates. Is thought to mediate docking of the importin/substrate complex to the nuclear pore complex (NPC) through binding to nucleoporin and the complex is subsequently translocated through the pore by an energy requiring, Ran-dependent mechanism. At the nucleoplasmic side of the NPC, Ran binds to the importin, the importin/substrate complex dissociates and importin is re-exported from the nucleus to the cytoplasm where GTP hydrolysis releases Ran. The directionality of nuclear import is thought to be conferred by an asymmetric distribution of the GTP- and GDP-bound forms of Ran between the cytoplasm and nucleus. Mediates the import of pre-assembled proteasomes into the nucleus; AKIRIN2 acts as a molecular bridge between IPO9 and the proteasome complex. Mediates the nuclear import of histones H2A, H2B, H4 and H4. In addition to nuclear import, also acts as a chaperone for histones by preventing inappropriate non-nucleosomal interactions. Mediates the nuclear import of actin. The polypeptide is Importin-9 (Mus musculus (Mouse)).